The primary structure comprises 266 residues: Glucosamine-6-phosphate deaminase (266 aa).

The active-site Proton acceptor; for enolization step is aspartate 72. Aspartate 141 acts as the For ring-opening step in catalysis. The Proton acceptor; for ring-opening step role is filled by histidine 143. The active-site For ring-opening step is the glutamate 148.

The protein belongs to the glucosamine/galactosamine-6-phosphate isomerase family. NagB subfamily. As to quaternary structure, homohexamer.

It catalyses the reaction alpha-D-glucosamine 6-phosphate + H2O = beta-D-fructose 6-phosphate + NH4(+). It participates in amino-sugar metabolism; N-acetylneuraminate degradation; D-fructose 6-phosphate from N-acetylneuraminate: step 5/5. With respect to regulation, allosterically activated by N-acetylglucosamine 6-phosphate (GlcNAc6P). Catalyzes the reversible isomerization-deamination of glucosamine 6-phosphate (GlcN6P) to form fructose 6-phosphate (Fru6P) and ammonium ion. The chain is Glucosamine-6-phosphate deaminase from Klebsiella pneumoniae subsp. pneumoniae (strain ATCC 700721 / MGH 78578).